Here is a 422-residue protein sequence, read N- to C-terminus: Phosphoribosylamine--glycine ligase (422 aa).

The ATP-grasp domain maps to 107-312 (KDVMAAAGVR…LGQLLHAAAT (206 aa)). An ATP-binding site is contributed by 137–193 (GPPAGDPAWVVKDDRLAAGKGVVVTADRDVARAHGAALLEAGHPVLLESYLDGPEVS). Glutamate 282 and asparagine 284 together coordinate Mg(2+).

This sequence belongs to the GARS family. Mg(2+) is required as a cofactor. The cofactor is Mn(2+).

The enzyme catalyses 5-phospho-beta-D-ribosylamine + glycine + ATP = N(1)-(5-phospho-beta-D-ribosyl)glycinamide + ADP + phosphate + H(+). The protein operates within purine metabolism; IMP biosynthesis via de novo pathway; N(1)-(5-phospho-D-ribosyl)glycinamide from 5-phospho-alpha-D-ribose 1-diphosphate: step 2/2. The sequence is that of Phosphoribosylamine--glycine ligase from Mycobacterium bovis (strain ATCC BAA-935 / AF2122/97).